The sequence spans 276 residues: Cruxhalorhodopsin-3 (276 aa).

The propeptide occupies Met1–Gly21. The Extracellular segment spans residues Glu22–Ser25. Residues Asn26 to Gly51 traverse the membrane as a helical segment. Residues Arg52–Ser57 lie on the Cytoplasmic side of the membrane. A helical membrane pass occupies residues Arg58–Ala81. Topologically, residues Ser82–Pro105 are extracellular. Residues Trp106 to Ala127 traverse the membrane as a helical segment. Over Asp128–Asp130 the chain is Cytoplasmic. Residues Met131–Val154 form a helical membrane-spanning segment. Residues Thr155 to Ser157 lie on the Extracellular side of the membrane. Residues His158–Leu180 traverse the membrane as a helical segment. The Cytoplasmic segment spans residues Val181–Thr192. A helical transmembrane segment spans residues Ser193–Leu216. The Extracellular segment spans residues Gly217 to Ser225. A helical membrane pass occupies residues Val226–Ala254. The residue at position 241 (Lys241) is an N6-(retinylidene)lysine. The Cytoplasmic portion of the chain corresponds to Asn255–Asp276.

It belongs to the archaeal/bacterial/fungal opsin family.

It is found in the cell membrane. In terms of biological role, light-driven chloride pump. The chain is Cruxhalorhodopsin-3 (choP3) from Haloarcula vallismortis (Halobacterium vallismortis).